The chain runs to 265 residues: Small ribosomal subunit protein uS2 (265 aa).

The disordered stretch occupies residues 226-265; the sequence is AAAPNSASVREEEFSAESADEGKGRRAPAKKGDKKADAAE. Positions 245-265 are enriched in basic and acidic residues; it reads DEGKGRRAPAKKGDKKADAAE.

This sequence belongs to the universal ribosomal protein uS2 family.

In Xanthomonas euvesicatoria pv. vesicatoria (strain 85-10) (Xanthomonas campestris pv. vesicatoria), this protein is Small ribosomal subunit protein uS2.